The following is a 1128-amino-acid chain: Exportin-6 (1128 aa).

Positions 31–97 (IEELLNSFAG…RSCLPKLLLS (67 aa)) constitute an Importin N-terminal domain.

This sequence belongs to the exportin family.

It localises to the nucleus. Its subcellular location is the cytoplasm. Functionally, mediates the nuclear export of actin and profilin-actin complexes in somatic cells. The sequence is that of Exportin-6 (xpo6) from Danio rerio (Zebrafish).